The following is a 127-amino-acid chain: Modulator protein MzrA (127 aa).

The Cytoplasmic portion of the chain corresponds to 1–10 (MGLQNMTLRR). A helical membrane pass occupies residues 11-31 (FTLSMSALLLLCALLWLWAAL). At 32-127 (EQQESSLAIR…RLRDAPHRLG (96 aa)) the chain is on the periplasmic side.

The protein belongs to the MzrA family. In terms of assembly, interacts with EnvZ.

It is found in the cell inner membrane. In terms of biological role, modulates the activity of the EnvZ/OmpR two-component regulatory system, probably by directly modulating EnvZ enzymatic activity and increasing stability of phosphorylated OmpR. The chain is Modulator protein MzrA from Enterobacter lignolyticus (strain SCF1).